The chain runs to 426 residues: Enolase (426 aa).

Gln-162 serves as a coordination point for (2R)-2-phosphoglycerate. Residue Glu-204 is the Proton donor of the active site. Mg(2+)-binding residues include Asp-241, Glu-284, and Asp-311. Residues Lys-336, Arg-365, Ser-366, and Lys-387 each contribute to the (2R)-2-phosphoglycerate site. Residue Lys-336 is the Proton acceptor of the active site.

This sequence belongs to the enolase family. In terms of assembly, component of the RNA degradosome, a multiprotein complex involved in RNA processing and mRNA degradation. Requires Mg(2+) as cofactor.

The protein resides in the cytoplasm. It localises to the secreted. The protein localises to the cell surface. The catalysed reaction is (2R)-2-phosphoglycerate = phosphoenolpyruvate + H2O. Its pathway is carbohydrate degradation; glycolysis; pyruvate from D-glyceraldehyde 3-phosphate: step 4/5. Functionally, catalyzes the reversible conversion of 2-phosphoglycerate (2-PG) into phosphoenolpyruvate (PEP). It is essential for the degradation of carbohydrates via glycolysis. The chain is Enolase from Thioalkalivibrio sulfidiphilus (strain HL-EbGR7).